We begin with the raw amino-acid sequence, 606 residues long: Radial spoke head protein 3 homolog (606 aa).

The interval 1-103 (MARSEARRQA…NSPEAPPLDG (103 aa)) is disordered. A compositionally biased stretch (basic and acidic residues) spans 15-46 (PRAVPEERALRERRQPRPRREPLESGAGDHRR). The residue at position 331 (T331) is a Phosphothreonine; by MAPK1. Residues 393 to 429 (AYEELRNIELAEVQRLEEQERRHREEKERRKQQQWQV) are a coiled coil. The interval 520-606 (EGRHASVRPE…KSSKREELSQ (87 aa)) is disordered. Residues 547-556 (SQDQGASQAQ) show a composition bias toward polar residues. Residues 572 to 604 (ARYAERVSSQERRLAEENDELTEMRKSSKREEL) adopt a coiled-coil conformation. Basic and acidic residues predominate over residues 573–606 (RYAERVSSQERRLAEENDELTEMRKSSKREELSQ).

Belongs to the flagellar radial spoke RSP3 family. As to quaternary structure, component of the axonemal radial spoke 1 (RS1) and 2 (RS2) complexes, at least composed of spoke head proteins RSPH1, RSPH3, RSPH9 and the cilia-specific component RSPH4A or sperm-specific component RSPH6A, spoke stalk proteins RSPH14, DNAJB13, DYDC1, ROPN1L and NME5, and the RS1 complex-specific anchor protein IQUB. Interacts with IQUB. Interacts with phosphorylated MAPK1. Interacts with MEK1. Interacts with PKA regulatory subunits PRKAR1A and PRKAR1B. Interacts with RSPH1. Interacts with RSPH4A. Interacts with RSPH6A. Interacts with RSPH9. Interacts with LRRC23.

Its subcellular location is the cytoplasm. The protein resides in the cytoskeleton. The protein localises to the cilium axoneme. It localises to the flagellum axoneme. Functionally, functions as part of axonemal radial spoke complexes that play an important part in the motility of sperm and cilia. Functions as a protein kinase A-anchoring protein that scaffolds the cAMP-dependent protein kinase holoenzyme. May serve as a point of convergence for MAPK and PKA signaling in cilia. This Bos taurus (Bovine) protein is Radial spoke head protein 3 homolog (RSPH3).